The chain runs to 581 residues: Mitosis inhibitor protein kinase mik1 (581 aa).

Disordered stretches follow at residues 43 to 71 (GHEE…HTPM) and 148 to 178 (NLTN…PLSP). Residues 59–71 (KPSNTKRSPHTPM) show a composition bias toward polar residues. The span at 160–169 (PCKKGTKIKL) shows a compositional bias: basic residues. The 273-residue stretch at 289–561 (FQQVKPIHES…LLAMPEMIFI (273 aa)) folds into the Protein kinase domain. ATP-binding positions include 295–303 (IHESDFSFV) and Lys-320. Asp-417 (proton acceptor) is an active-site residue. The Mg(2+) site is built by Asn-422 and Asp-435.

The protein belongs to the protein kinase superfamily. Ser/Thr protein kinase family. WEE1 subfamily.

It carries out the reaction L-seryl-[protein] + ATP = O-phospho-L-seryl-[protein] + ADP + H(+). The enzyme catalyses L-threonyl-[protein] + ATP = O-phospho-L-threonyl-[protein] + ADP + H(+). Functionally, protein kinase that acts both on serines and on tyrosines. It acts as a negative regulator of entry into mitosis (G2 to M transition). Phosphorylates and inhibits cdc2. The sequence is that of Mitosis inhibitor protein kinase mik1 (mik1) from Schizosaccharomyces pombe (strain 972 / ATCC 24843) (Fission yeast).